The chain runs to 1530 residues: Regulating synaptic membrane exocytosis protein 2 (1530 aa).

The tract at residues 1-34 is disordered; that stretch reads MSAPLGPRGRPAPTPAASQPPPQPEMPDLSHLTE. A compositionally biased stretch (pro residues) spans 10 to 25; it reads RPAPTPAASQPPPQPE. A RabBD domain is found at 26–194; sequence MPDLSHLTEE…TKSGAWFYNS (169 aa). The FYVE-type zinc-finger motif lies at 126–182; that stretch reads KGDAPTCGICHKTKFADGCGHNCSYCQTKFCARCGGRVSLRSNKVMWVCNLCRKQQE. The Zn(2+) site is built by cysteine 132, cysteine 135, cysteine 148, cysteine 151, cysteine 156, cysteine 159, cysteine 174, and cysteine 177. Disordered regions lie at residues 195 to 608 and 632 to 655; these read GSNT…ERQK and SGVDTCSSTTLNEEHSHSDKHPVT. 5 stretches are compositionally biased toward basic and acidic residues: residues 210-225, 327-338, 357-375, 391-410, and 419-443; these read LRNEEAPQEKKAKLHE, EPGHLNYRDSNR, RDEYERQRREEEYQARYRS, EQMRIHAEVSRARHERRHSD, and EDSRISLLRMDRPSRQRSVSERRAA. At serine 409 the chain carries Phosphoserine. The segment covering 458 to 472 has biased composition (polar residues); that stretch reads AQGQSSYPQRTSNHS. Over residues 484–501 the composition is skewed to basic and acidic residues; the sequence is DRPDMRRADSLRKQHHLD. Polar residues predominate over residues 519 to 530; it reads RNDSLSSDQSES. Residues 537-546 show a composition bias toward basic residues; the sequence is RPHKSKKGGK. A compositionally biased stretch (acidic residues) spans 567 to 577; it reads SCDDVELESES. Composition is skewed to basic and acidic residues over residues 578–592 and 643–653; these read VSEKGDSQKGKRKTS and NEEHSHSDKHP. The PDZ domain maps to 677 to 763; sequence DGSVPRDSGA…EPQVELVVSR (87 aa). Phosphothreonine is present on threonine 698. Residues 771-802 form a disordered region; the sequence is IPDSTHAQLESSSSSFESQKMDRPSISVTSPM. Residues serine 800 and serine 803 each carry the phosphoserine modification. In terms of domain architecture, C2 1 spans 814–937; the sequence is LSGQLSIKLW…ALLDDEPHWY (124 aa). 6 disordered regions span residues 948 to 982, 1003 to 1122, 1130 to 1149, 1154 to 1187, 1242 to 1263, and 1282 to 1307; these read PLPRPSPYLPRRQLHGESPTRRLQRSKRISDSEVS, LQSS…ERSA, RQMKLNKYKQVAGSDPRLEQ, KYRSGWDPHRGADTVSTKSSDSDVSDVSAVSRTS, SLEKNDGSQSDTAVGALGTSGK, and KSRSASQLSQTEGGGKKLRSTVQRST. Polar residues predominate over residues 1003–1024; it reads LQSSTLSVPEQVMSSNHCSPSG. Basic and acidic residues predominate over residues 1067–1086; it reads RMDRHRVMDDHYSSDRDRSH. Positions 1088-1101 are enriched in polar residues; the sequence is RTGSVQTSPSSTPG. Residue serine 1095 is modified to Phosphoserine. Residues 1154-1165 show a composition bias toward basic and acidic residues; that stretch reads KYRSGWDPHRGA. Serine 1175 is modified (phosphoserine). The span at 1178–1187 shows a compositional bias: low complexity; that stretch reads SDVSAVSRTS. Serine 1251 is modified (phosphoserine). The C2 2 domain maps to 1376–1494; it reads AMGDIQVGMM…ELSNMVIGWF (119 aa). Residues serine 1515 and serine 1518 each carry the phosphoserine modification.

In terms of assembly, interacts with TSPOAP1 and RIMBP2. Interacts with PPFIA3 and PPFIA4. Interacts via its zinc finger with the first C2 domain of UNC13A. Forms a complex consisting of UNC13A, RIMS2 and RAB3A. Heterodimer with PCLO. Part of a ternary complex involving PCLO and EPAC2. Interacts with RAB3A and RAB3B that have been activated by GTP-binding. Interacts with RAB3C, RAB3D and RAB26. In terms of tissue distribution, detected in testis, pituitary and an insulinoma cell line. Detected at low levels in cerebellar cortex.

Its subcellular location is the synapse. It localises to the synaptosome. Its function is as follows. Rab effector involved in exocytosis. May act as scaffold protein. Plays a role in dendrite formation by melanocytes. The polypeptide is Regulating synaptic membrane exocytosis protein 2 (Rims2) (Mus musculus (Mouse)).